Consider the following 238-residue polypeptide: tRNA (guanine-N(1)-)-methyltransferase (238 aa).

Residue 132–137 (IGDYVL) participates in S-adenosyl-L-methionine binding.

This sequence belongs to the RNA methyltransferase TrmD family. In terms of assembly, homodimer.

It localises to the cytoplasm. The enzyme catalyses guanosine(37) in tRNA + S-adenosyl-L-methionine = N(1)-methylguanosine(37) in tRNA + S-adenosyl-L-homocysteine + H(+). Specifically methylates guanosine-37 in various tRNAs. The sequence is that of tRNA (guanine-N(1)-)-methyltransferase from Nitrobacter hamburgensis (strain DSM 10229 / NCIMB 13809 / X14).